Here is a 210-residue protein sequence, read N- to C-terminus: Ovomucoid (210 aa).

The first 24 residues, 1-24 (MAMAGVFVLFSFVLCGFLPDAAFG), serve as a signal peptide directing secretion. Kazal-like domains are found at residues 25–88 (AEVD…ECKE), 89–153 (TVPM…GCRK), and 156–210 (AAVS…FGKC). Intrachain disulfides connect Cys-29/Cys-68, Cys-46/Cys-65, and Cys-54/Cys-86. The N-linked (GlcNAc...) asparagine glycan is linked to Asn-34. Residues Asn-77, Asn-93, and Asn-99 are each glycosylated (N-linked (GlcNAc...) asparagine). 6 disulfide bridges follow: Cys-94/Cys-133, Cys-111/Cys-130, Cys-119/Cys-151, Cys-162/Cys-192, Cys-170/Cys-189, and Cys-178/Cys-210. Asn-199 is a glycosylation site (N-linked (GlcNAc...) asparagine; partial).

It localises to the secreted. Functionally, serine protease inhibitor. Inhibits trypsin. The chain is Ovomucoid from Gallus gallus (Chicken).